We begin with the raw amino-acid sequence, 384 residues long: Cytochrome b (384 aa).

A run of 4 helical transmembrane segments spans residues 32–52 (VGSL…FLAM), 76–98 (WLIR…LHIG), 113–133 (LWVI…MGYC), and 179–199 (FFAL…MHLM). The heme b site is built by His-82 and His-96. Heme b-binding residues include His-183 and His-197. His-202 contacts a ubiquinone. 4 helical membrane passes run 225 to 245 (FIFK…LFVF), 289 to 309 (LGGV…PYTD), 321 to 341 (LSKF…NLGQ), and 348 to 368 (YIEL…LIVP).

Belongs to the cytochrome b family. In terms of assembly, fungal cytochrome b-c1 complex contains 10 subunits; 3 respiratory subunits, 2 core proteins and 5 low-molecular weight proteins. Cytochrome b-c1 complex is a homodimer. Requires heme b as cofactor.

It is found in the mitochondrion inner membrane. In terms of biological role, component of the ubiquinol-cytochrome c reductase complex (complex III or cytochrome b-c1 complex) that is part of the mitochondrial respiratory chain. The b-c1 complex mediates electron transfer from ubiquinol to cytochrome c. Contributes to the generation of a proton gradient across the mitochondrial membrane that is then used for ATP synthesis. This is Cytochrome b (COB) from Candida parapsilosis (Yeast).